The primary structure comprises 84 residues: U2-theraphotoxin-Cg1b 1 (84 aa).

The first 21 residues, 1-21, serve as a signal peptide directing secretion; it reads MKVSVLITLAVWGVMFLLTSA. Residues 22–48 constitute a propeptide that is removed on maturation; it reads QERGSDQMDSPAWLKSMERIFQSEERE. Intrachain disulfides connect cysteine 49–cysteine 63, cysteine 56–cysteine 68, and cysteine 62–cysteine 76.

It belongs to the neurotoxin 10 (Hwtx-1) family. 06 (F4b) subfamily. In terms of tissue distribution, expressed by the venom gland.

It localises to the secreted. Its function is as follows. Probable ion channel inhibitor. The chain is U2-theraphotoxin-Cg1b 1 from Chilobrachys guangxiensis (Chinese earth tiger tarantula).